We begin with the raw amino-acid sequence, 189 residues long: MQIWAGLGNPGSSYALNRHNVGFMAVDMLASEKSFAPWKRAFQGQVSLGQIDQERILLLKPATFMNESGRAIGEAMRFYKLAPEDVTVFHDELDIAPMRVKVKKGGGAAGHNGLRSTIAHIGQSFRRVRLGIGHPGEKSRVHDYVLGNFAKSETDSLADMLNAINQAIPWLANDDDARFMSEIALRRQS.

Position 14 (Tyr-14) interacts with tRNA. Residue His-19 is the Proton acceptor of the active site. TRNA-binding residues include Phe-64, Asn-66, and Asn-112.

The protein belongs to the PTH family. In terms of assembly, monomer.

Its subcellular location is the cytoplasm. It catalyses the reaction an N-acyl-L-alpha-aminoacyl-tRNA + H2O = an N-acyl-L-amino acid + a tRNA + H(+). Functionally, hydrolyzes ribosome-free peptidyl-tRNAs (with 1 or more amino acids incorporated), which drop off the ribosome during protein synthesis, or as a result of ribosome stalling. Catalyzes the release of premature peptidyl moieties from peptidyl-tRNA molecules trapped in stalled 50S ribosomal subunits, and thus maintains levels of free tRNAs and 50S ribosomes. The polypeptide is Peptidyl-tRNA hydrolase (Zymomonas mobilis subsp. mobilis (strain ATCC 31821 / ZM4 / CP4)).